The following is a 334-amino-acid chain: TPR repeat-containing protein YsoA (334 aa).

3 TPR repeats span residues 17–50 (KDRL…DDTE), 52–84 (DLHL…GYGH), and 195–230 (HPII…EPSE).

This Bacillus subtilis (strain 168) protein is TPR repeat-containing protein YsoA (ysoA).